Here is a 453-residue protein sequence, read N- to C-terminus: MVKSLHYFILPLIGNALILNTPPEYQPGYGYVGPACAVFDSTLFLHGVSKRKLNDHELHIFSSYQHDLSAFKDSSSSFDSFEASFPTIPKFCGGYDDSIEVVLDSCIVRNNHVYVGDHLIRPLTNFEKQKIQLVKMRRMYGESKRKRSKRSSKPLPGTRPQRDFSEMLHKLLNINSTVTSRFLPVVSQSPLFAMEGPWQNLFELGKDKDMIELLAASQFKPQLPPVASVPVAPVIDITKIDSPYRATFTTMKPRKSQKPEKKKEVFNVFTTKTNPQITTTTMTTTTRTSTAIPTTTTTPRQISLQTIPFSTTTRQPNFDKTKTPATMPSASSSSLSSIQTVVDPIILKLISKALEKNEMIDEYSLKQALSMRNVATTTTPLPLRFILPTPAAPNPFLPSTRVGGLSHNHLFIPHQPFTTLVSTDSRYSAPNPLSHRLPNEICRVHMNSNPFHF.

Disordered regions lie at residues 140–161 (YGES…TRPQ) and 311–332 (TTTR…SASS).

This is an uncharacterized protein from Caenorhabditis elegans.